Reading from the N-terminus, the 550-residue chain is Methyl-coenzyme M reductase subunit alpha (550 aa).

Coenzyme F430 is bound at residue Q147. Coenzyme B-binding positions include R225, 256 to 257 (KH), and R270. H257 bears the Pros-methylhistidine mark. Residue R271 is modified to 5-methylarginine. Y333 lines the coenzyme M pocket. A 2-methylglutamine modification is found at Q400. Y444 is a binding site for coenzyme M. A 1-thioglycine modification is found at G445. D450 is subject to (Z)-2,3-didehydroaspartate. The residue at position 452 (C452) is an S-methylcysteine.

Belongs to the methyl-coenzyme M reductase alpha subunit family. As to quaternary structure, MCR is a hexamer of two alpha, two beta, and two gamma chains, forming a dimer of heterotrimers. Coenzyme F430 serves as cofactor. The alpha subunit contains six modified amino acids near the active site region. Is methylated on His-257, Arg-271, Gln-400 and Cys-452, probably by the action of specific S-adenosylmethionine-dependent methyltransferases. Also contains a thioglycine at position 445, forming a thiopeptide bond. Contains a didehydroaspartate residue at position 450. The methylation on C5 of Arg-271 is a post-translational methylation not essential in vivo, but which plays a role for the stability and structural integrity of MCR.

Its subcellular location is the cytoplasm. It catalyses the reaction coenzyme B + methyl-coenzyme M = methane + coenzyme M-coenzyme B heterodisulfide. Its pathway is one-carbon metabolism; methyl-coenzyme M reduction; methane from methyl-coenzyme M: step 1/1. Its function is as follows. Component of the methyl-coenzyme M reductase (MCR) I that catalyzes the reductive cleavage of methyl-coenzyme M (CoM-S-CH3 or 2-(methylthio)ethanesulfonate) using coenzyme B (CoB or 7-mercaptoheptanoylthreonine phosphate) as reductant which results in the production of methane and the mixed heterodisulfide of CoB and CoM (CoM-S-S-CoB). This is the final step in methanogenesis. This chain is Methyl-coenzyme M reductase subunit alpha (mcrA), found in Methanothermobacter thermautotrophicus (strain ATCC 29096 / DSM 1053 / JCM 10044 / NBRC 100330 / Delta H) (Methanobacterium thermoautotrophicum).